A 552-amino-acid polypeptide reads, in one-letter code: 2-methyl-1,2-propanediol dehydrogenase (552 aa).

This sequence belongs to the GMC oxidoreductase family. FAD is required as a cofactor.

It localises to the cytoplasm. It carries out the reaction 2-methylpropane-1,2-diol + NAD(+) = 2-hydroxy-2-methylpropanal + NADH + H(+). Involved in the degradation of methyl tert-butyl ether (MTBE). Catalyzes the conversion of 2-methyl 1,2-propanediol (2-M1,2-PD) to hydroxyisobutyraldehyde. This Mycolicibacterium austroafricanum (Mycobacterium austroafricanum) protein is 2-methyl-1,2-propanediol dehydrogenase.